We begin with the raw amino-acid sequence, 359 residues long: Anhydro-N-acetylmuramic acid kinase (359 aa).

Residue 12–19 (GTSLDGVD) participates in ATP binding.

It belongs to the anhydro-N-acetylmuramic acid kinase family.

The catalysed reaction is 1,6-anhydro-N-acetyl-beta-muramate + ATP + H2O = N-acetyl-D-muramate 6-phosphate + ADP + H(+). Its pathway is amino-sugar metabolism; 1,6-anhydro-N-acetylmuramate degradation. It functions in the pathway cell wall biogenesis; peptidoglycan recycling. Functionally, catalyzes the specific phosphorylation of 1,6-anhydro-N-acetylmuramic acid (anhMurNAc) with the simultaneous cleavage of the 1,6-anhydro ring, generating MurNAc-6-P. Is required for the utilization of anhMurNAc either imported from the medium or derived from its own cell wall murein, and thus plays a role in cell wall recycling. This is Anhydro-N-acetylmuramic acid kinase from Sulfurovum sp. (strain NBC37-1).